Consider the following 352-residue polypeptide: Beta-hexosaminidase (352 aa).

Substrate contacts are provided by residues Asp-74, Arg-82, Arg-149, and 179–180 (KH). Catalysis depends on His-192, which acts as the Proton donor/acceptor. Asp-263 acts as the Nucleophile in catalysis.

The protein belongs to the glycosyl hydrolase 3 family. NagZ subfamily.

Its subcellular location is the cytoplasm. It carries out the reaction Hydrolysis of terminal non-reducing N-acetyl-D-hexosamine residues in N-acetyl-beta-D-hexosaminides.. It participates in cell wall biogenesis; peptidoglycan recycling. Functionally, plays a role in peptidoglycan recycling by cleaving the terminal beta-1,4-linked N-acetylglucosamine (GlcNAc) from peptide-linked peptidoglycan fragments, giving rise to free GlcNAc, anhydro-N-acetylmuramic acid and anhydro-N-acetylmuramic acid-linked peptides. The chain is Beta-hexosaminidase from Bordetella pertussis (strain Tohama I / ATCC BAA-589 / NCTC 13251).